The sequence spans 91 residues: Putative defensin-like protein 221 (91 aa).

The N-terminal stretch at 1–19 (MKTLFFFLTIAVLVSSCTS) is a signal peptide. 3 disulfides stabilise this stretch: Cys-61-Cys-78, Cys-64-Cys-83, and Cys-68-Cys-85.

Belongs to the DEFL family.

It is found in the secreted. This is Putative defensin-like protein 221 from Arabidopsis thaliana (Mouse-ear cress).